Here is a 1066-residue protein sequence, read N- to C-terminus: DNA-directed RNA polymerase subunit beta (1066 aa).

It belongs to the RNA polymerase beta chain family. In plastids the minimal PEP RNA polymerase catalytic core is composed of four subunits: alpha, beta, beta', and beta''. When a (nuclear-encoded) sigma factor is associated with the core the holoenzyme is formed, which can initiate transcription.

It localises to the plastid. Its subcellular location is the chloroplast. The catalysed reaction is RNA(n) + a ribonucleoside 5'-triphosphate = RNA(n+1) + diphosphate. DNA-dependent RNA polymerase catalyzes the transcription of DNA into RNA using the four ribonucleoside triphosphates as substrates. This is DNA-directed RNA polymerase subunit beta from Coffea arabica (Arabian coffee).